The sequence spans 354 residues: Chorismate synthase (354 aa).

R48 contributes to the NADP(+) binding site. FMN is bound by residues 126–128, A278, 293–297, and R319; these read RAS and KPIPS.

It belongs to the chorismate synthase family. In terms of assembly, homotetramer. The cofactor is FMNH2.

It carries out the reaction 5-O-(1-carboxyvinyl)-3-phosphoshikimate = chorismate + phosphate. The protein operates within metabolic intermediate biosynthesis; chorismate biosynthesis; chorismate from D-erythrose 4-phosphate and phosphoenolpyruvate: step 7/7. In terms of biological role, catalyzes the anti-1,4-elimination of the C-3 phosphate and the C-6 proR hydrogen from 5-enolpyruvylshikimate-3-phosphate (EPSP) to yield chorismate, which is the branch point compound that serves as the starting substrate for the three terminal pathways of aromatic amino acid biosynthesis. This reaction introduces a second double bond into the aromatic ring system. The protein is Chorismate synthase of Desulfosudis oleivorans (strain DSM 6200 / JCM 39069 / Hxd3) (Desulfococcus oleovorans).